A 256-amino-acid chain; its full sequence is Acetyl-coenzyme A carboxylase carboxyl transferase subunit alpha (256 aa).

Residues 1–236 enclose the CoA carboxyltransferase C-terminal domain; it reads MTDVSRVLKE…KANLIEQITS (236 aa).

The protein belongs to the AccA family. Acetyl-CoA carboxylase is a heterohexamer composed of biotin carboxyl carrier protein (AccB), biotin carboxylase (AccC) and two subunits each of ACCase subunit alpha (AccA) and ACCase subunit beta (AccD).

The protein localises to the cytoplasm. It carries out the reaction N(6)-carboxybiotinyl-L-lysyl-[protein] + acetyl-CoA = N(6)-biotinyl-L-lysyl-[protein] + malonyl-CoA. Its pathway is lipid metabolism; malonyl-CoA biosynthesis; malonyl-CoA from acetyl-CoA: step 1/1. Functionally, component of the acetyl coenzyme A carboxylase (ACC) complex. First, biotin carboxylase catalyzes the carboxylation of biotin on its carrier protein (BCCP) and then the CO(2) group is transferred by the carboxyltransferase to acetyl-CoA to form malonyl-CoA. The sequence is that of Acetyl-coenzyme A carboxylase carboxyl transferase subunit alpha from Streptococcus pyogenes serotype M2 (strain MGAS10270).